The sequence spans 332 residues: Glycerol-3-phosphate dehydrogenase [NAD(P)+] (332 aa).

NADPH-binding residues include Ser-15, Trp-16, and Lys-110. Sn-glycerol 3-phosphate contacts are provided by Lys-110, Gly-137, and Ser-139. Ala-141 contributes to the NADPH binding site. Sn-glycerol 3-phosphate-binding residues include Lys-192, Asp-245, Ser-255, Arg-256, and Asn-257. Lys-192 acts as the Proton acceptor in catalysis. Arg-256 serves as a coordination point for NADPH. Glu-282 serves as a coordination point for NADPH.

It belongs to the NAD-dependent glycerol-3-phosphate dehydrogenase family.

The protein resides in the cytoplasm. The catalysed reaction is sn-glycerol 3-phosphate + NAD(+) = dihydroxyacetone phosphate + NADH + H(+). It catalyses the reaction sn-glycerol 3-phosphate + NADP(+) = dihydroxyacetone phosphate + NADPH + H(+). It functions in the pathway membrane lipid metabolism; glycerophospholipid metabolism. In terms of biological role, catalyzes the reduction of the glycolytic intermediate dihydroxyacetone phosphate (DHAP) to sn-glycerol 3-phosphate (G3P), the key precursor for phospholipid synthesis. In Coxiella burnetii (strain CbuG_Q212) (Coxiella burnetii (strain Q212)), this protein is Glycerol-3-phosphate dehydrogenase [NAD(P)+].